Reading from the N-terminus, the 129-residue chain is Small ribosomal subunit protein uS11 (129 aa).

Belongs to the universal ribosomal protein uS11 family. As to quaternary structure, part of the 30S ribosomal subunit. Interacts with proteins S7 and S18. Binds to IF-3.

Located on the platform of the 30S subunit, it bridges several disparate RNA helices of the 16S rRNA. Forms part of the Shine-Dalgarno cleft in the 70S ribosome. This Pseudomonas fluorescens (strain ATCC BAA-477 / NRRL B-23932 / Pf-5) protein is Small ribosomal subunit protein uS11.